The sequence spans 244 residues: L-xylulose reductase (244 aa).

M1 is subject to N-acetylmethionine. 11-40 (LVTGAGKGIGRGTVQALHATGARVVAVSRT) contributes to the NADP(+) binding site. Residue R21 is modified to Omega-N-methylarginine. S46 is subject to Phosphoserine. S136 serves as a coordination point for substrate. The active-site Proton acceptor is the Y149. K153 provides a ligand contact to NADP(+).

It belongs to the short-chain dehydrogenases/reductases (SDR) family. In terms of assembly, homotetramer. In terms of tissue distribution, highly expressed in kidney, liver and epididymis. In the epididymis, it is mainly expressed in the proximal and distal sections of the corpus region. Weakly or not expressed in brain, lung, heart, spleen and testis.

It is found in the membrane. It catalyses the reaction xylitol + NADP(+) = L-xylulose + NADPH + H(+). Its function is as follows. Catalyzes the NADPH-dependent reduction of several pentoses, tetroses, trioses, alpha-dicarbonyl compounds and L-xylulose. Participates in the uronate cycle of glucose metabolism. May play a role in the water absorption and cellular osmoregulation in the proximal renal tubules by producing xylitol, an osmolyte, thereby preventing osmolytic stress from occurring in the renal tubules. The protein is L-xylulose reductase (DCXR) of Homo sapiens (Human).